The primary structure comprises 631 residues: Phosphomethylpyrimidine synthase (631 aa).

Residues Asn239, Met268, Tyr297, His333, 353 to 355 (SRG), 394 to 397 (DGLR), and Glu433 contribute to the substrate site. His437 serves as a coordination point for Zn(2+). Tyr460 serves as a coordination point for substrate. His501 is a Zn(2+) binding site. Cys581, Cys584, and Cys589 together coordinate [4Fe-4S] cluster.

The protein belongs to the ThiC family. Homodimer. Requires [4Fe-4S] cluster as cofactor.

It carries out the reaction 5-amino-1-(5-phospho-beta-D-ribosyl)imidazole + S-adenosyl-L-methionine = 4-amino-2-methyl-5-(phosphooxymethyl)pyrimidine + CO + 5'-deoxyadenosine + formate + L-methionine + 3 H(+). It participates in cofactor biosynthesis; thiamine diphosphate biosynthesis. Its function is as follows. Catalyzes the synthesis of the hydroxymethylpyrimidine phosphate (HMP-P) moiety of thiamine from aminoimidazole ribotide (AIR) in a radical S-adenosyl-L-methionine (SAM)-dependent reaction. The polypeptide is Phosphomethylpyrimidine synthase (Salmonella enteritidis PT4 (strain P125109)).